Consider the following 361-residue polypeptide: MALSMDNIVISNEEEIYMMKAMHIPCGLYLNMVLKAAIELDLFEIIAKSTTQKLSSYEIASQIPTKNPNASSLVLERILRFLASQSFLTCNITKNDDGIVHTSYNLTPLSQSLISDKDGSSIAPFLLLATDPVAVNSWFHFKDAILEGEIPFNKAHGVHAFEYHGKDSRMNGLFNRAMQNVTCTEMKRIVECYNGFQGVKEIIDVGGGLGISLATIISKYPNIKGINFDLPHVIKDAPTYEGIEHVGGDMFKSVPQRELILLKAILHDWDDEYCVKILKNCWRALPKDGKVVVIEQMQPEYPETNLISKNSSSVDMLMMTMLDGGKERTKQQFEDLAKQAGFTVFKIVARAYYCWVIELYK.

Aspartate 229 is a binding site for S-adenosyl-L-methionine. Catalysis depends on histidine 267, which acts as the Proton acceptor.

The protein belongs to the class I-like SAM-binding methyltransferase superfamily. Cation-independent O-methyltransferase family. In terms of assembly, homodimer. In terms of tissue distribution, mainly expressed in leaves secreting glandular trichomes types 1 and 4 and, to a lesser extent, in storage trichomes type 6.

It carries out the reaction kaempferol + S-adenosyl-L-methionine = 3-O-methylkaempferol + S-adenosyl-L-homocysteine + H(+). It catalyses the reaction quercetin + S-adenosyl-L-methionine = 3',4',5,7-tetrahydroxy-3-methoxyflavone + S-adenosyl-L-homocysteine + H(+). The enzyme catalyses myricetin + S-adenosyl-L-methionine = 3-O-methylmyricetin + S-adenosyl-L-homocysteine + H(+). The catalysed reaction is kaempferide + S-adenosyl-L-methionine = 3,4'-O-dimethylkaempferol + S-adenosyl-L-homocysteine + H(+). It carries out the reaction isorhamnetin + S-adenosyl-L-methionine = 3,3'-O-dimethylquercetin + S-adenosyl-L-homocysteine + H(+). It catalyses the reaction rhamnetin + S-adenosyl-L-methionine = 3',4',5-trihydroxy-3,7-dimethoxyflavone + S-adenosyl-L-homocysteine + H(+). The enzyme catalyses laricitrin + S-adenosyl-L-methionine = 3,3'-O-dimethylmyricetin + S-adenosyl-L-homocysteine + H(+). The catalysed reaction is syringetin + S-adenosyl-L-methionine = 3,3',5'-O-trimethylmyricetin + S-adenosyl-L-homocysteine + H(+). It functions in the pathway flavonoid metabolism. Functionally, flavonoid 3-O-methyltransferase involved in the biosynthesis of polymethoxylated flavonoids natural products such as myricetin derivatives, aroma compounds possessing antioxidant properties and exhibiting pharmacological activities such as anti-carcinogen, anti-viral, anti-thrombotic, anti-diabetic, anti-atherosclerotic, and anti-inflammatory effects. Catalyzes S-adenosylmethionine-dependent regioselective 3-O-methylation of flavonoids; active on various hydroxylated flavonoid substrates. Active with myricetin, quercetin, kaempferol, 4'-methyl kaempferol (kaempferide), 3'-methyl quercetin (isorhamnetin), 7-methyl quercetin (rhamnetin), 3'-methyl myricetin (laricitrin) and 3',5'-dimethyl myricetin (syringetin), thus producing 3-methyl myricetin, 3-methyl quercetin, 3-methyl kaempferol, 4',3-methyl kaempferol, 3',3-methyl quercetin, 7,3-dimethyl quercetin, 3',3-dimethyl myricetin and 3',5',3-dimethyl myricetin, respectively. Inactive with flavonol substrates methylated at the 3-hydroxyl position such as 3-O-methyl quercetin. The sequence is that of Myricetin 3-O-methyltransferase 3 from Solanum habrochaites (Wild tomato).